The following is a 315-amino-acid chain: Replication factor C small subunit (315 aa).

43-50 lines the ATP pocket; that stretch reads GSPGVGKT.

The protein belongs to the activator 1 small subunits family. RfcS subfamily. As to quaternary structure, heteromultimer composed of small subunits (RfcS) and large subunits (RfcL).

In terms of biological role, part of the RFC clamp loader complex which loads the PCNA sliding clamp onto DNA. The protein is Replication factor C small subunit of Methanococcus vannielii (strain ATCC 35089 / DSM 1224 / JCM 13029 / OCM 148 / SB).